The primary structure comprises 570 residues: Mitoguardin 1 (570 aa).

A helical transmembrane segment spans residues 34 to 54; that stretch reads GLKKIIAVAAISGVSLIFLAC.

The protein belongs to the mitoguardin family. Homodimer and heterodimer; forms heterodimers with miga2.

Its subcellular location is the mitochondrion outer membrane. Regulator of mitochondrial fusion: acts by forming homo- and heterodimers at the mitochondrial outer membrane and facilitating the formation of pld6/MitoPLD dimers. May act by regulating phospholipid metabolism via pld6/MitoPLD. In Xenopus laevis (African clawed frog), this protein is Mitoguardin 1.